The primary structure comprises 614 residues: Threonine--tRNA ligase (614 aa).

The segment at M1 to E141 is editing domain. The tract at residues A198–P490 is catalytic. Zn(2+) is bound by residues C290, H342, and H463.

The protein belongs to the class-II aminoacyl-tRNA synthetase family. As to quaternary structure, homodimer. Zn(2+) is required as a cofactor.

Its subcellular location is the cytoplasm. It carries out the reaction tRNA(Thr) + L-threonine + ATP = L-threonyl-tRNA(Thr) + AMP + diphosphate + H(+). Functionally, catalyzes the attachment of threonine to tRNA(Thr) in a two-step reaction: L-threonine is first activated by ATP to form Thr-AMP and then transferred to the acceptor end of tRNA(Thr). Also edits incorrectly charged L-seryl-tRNA(Thr). This chain is Threonine--tRNA ligase, found in Methanoregula boonei (strain DSM 21154 / JCM 14090 / 6A8).